A 99-amino-acid chain; its full sequence is RNA-binding protein Hfq (99 aa).

The 62-residue stretch at 10-71 (DLFLNQLRKE…ISSILPSKPI (62 aa)) folds into the Sm domain. Positions 77–99 (VQNSQVQNTASQQSNNNQNQESK) are disordered.

Belongs to the Hfq family. As to quaternary structure, homohexamer.

Functionally, RNA chaperone that binds small regulatory RNA (sRNAs) and mRNAs to facilitate mRNA translational regulation in response to envelope stress, environmental stress and changes in metabolite concentrations. Also binds with high specificity to tRNAs. The protein is RNA-binding protein Hfq of Caldicellulosiruptor saccharolyticus (strain ATCC 43494 / DSM 8903 / Tp8T 6331).